Reading from the N-terminus, the 172-residue chain is Small ribosomal subunit protein uS5 (172 aa).

Residues 16 to 79 (LKEKLVHINR…EDGKKNVIKV (64 aa)) enclose the S5 DRBM domain.

The protein belongs to the universal ribosomal protein uS5 family. Part of the 30S ribosomal subunit. Contacts proteins S4 and S8.

Functionally, with S4 and S12 plays an important role in translational accuracy. In terms of biological role, located at the back of the 30S subunit body where it stabilizes the conformation of the head with respect to the body. The chain is Small ribosomal subunit protein uS5 from Pelodictyon phaeoclathratiforme (strain DSM 5477 / BU-1).